We begin with the raw amino-acid sequence, 772 residues long: General transcription and DNA repair factor IIH helicase subunit XPD (772 aa).

Positions 7 to 283 (DLPILFPYPR…QSDSKKLQDE (277 aa)) constitute a Helicase ATP-binding domain. Position 42–49 (42–49 (MPSGTGKT)) interacts with ATP. The [4Fe-4S] cluster site is built by Cys115, Cys133, Cys154, and Cys189. The DEAH box signature appears at 233-236 (DEAH).

Belongs to the helicase family. RAD3/XPD subfamily. In terms of assembly, component of the 7-subunit TFIIH core complex composed of XPB/ptr8, XPD/rad15, ssl1, tfb1, tfb2, tfb4 and tfb5, which is active in NER. The core complex associates with the 3-subunit CTD-kinase module TFIIK composed of mcs2/cyclin H, mcs6/cdk7 and pmh1/tfb3 to form the 10-subunit holoenzyme (holo-TFIIH) active in transcription. [4Fe-4S] cluster serves as cofactor.

It is found in the nucleus. The enzyme catalyses Couples ATP hydrolysis with the unwinding of duplex DNA at the replication fork by translocating in the 5'-3' direction. This creates two antiparallel DNA single strands (ssDNA). The leading ssDNA polymer is the template for DNA polymerase III holoenzyme which synthesizes a continuous strand.. It catalyses the reaction ATP + H2O = ADP + phosphate + H(+). ATP-dependent 5'-3' DNA helicase, component of the general transcription and DNA repair factor IIH (TFIIH) core complex, which is involved in general and transcription-coupled nucleotide excision repair (NER) of damaged DNA and, when complexed to TFIIK, in RNA transcription by RNA polymerase II. In NER, TFIIH acts by opening DNA around the lesion to allow the excision of the damaged oligonucleotide and its replacement by a new DNA fragment. The ATP-dependent helicase activity of XPD/rad15 is required for DNA opening. In transcription, TFIIH has an essential role in transcription initiation. When the pre-initiation complex (PIC) has been established, TFIIH is required for promoter opening and promoter escape. Phosphorylation of the C-terminal tail (CTD) of the largest subunit of RNA polymerase II by the kinase module TFIIK controls the initiation of transcription. XPD/rad15 acts by forming a bridge between TFIIK and the core-TFIIH complex. Involved in the maintenance of the fidelity of DNA replication. The polypeptide is General transcription and DNA repair factor IIH helicase subunit XPD (Schizosaccharomyces pombe (strain 972 / ATCC 24843) (Fission yeast)).